A 375-amino-acid chain; its full sequence is N5-carboxyaminoimidazole ribonucleotide synthase (375 aa).

Residues arginine 108, lysine 148, 153-159 (GYDGKGQ), 183-186 (EQYL), glutamate 191, histidine 214, and 268-269 (NE) contribute to the ATP site. Positions 112-298 (KQTLQDSGSN…QFDTHIKAIT (187 aa)) constitute an ATP-grasp domain.

It belongs to the PurK/PurT family. In terms of assembly, homodimer.

The catalysed reaction is 5-amino-1-(5-phospho-beta-D-ribosyl)imidazole + hydrogencarbonate + ATP = 5-carboxyamino-1-(5-phospho-D-ribosyl)imidazole + ADP + phosphate + 2 H(+). Its pathway is purine metabolism; IMP biosynthesis via de novo pathway; 5-amino-1-(5-phospho-D-ribosyl)imidazole-4-carboxylate from 5-amino-1-(5-phospho-D-ribosyl)imidazole (N5-CAIR route): step 1/2. Its function is as follows. Catalyzes the ATP-dependent conversion of 5-aminoimidazole ribonucleotide (AIR) and HCO(3)(-) to N5-carboxyaminoimidazole ribonucleotide (N5-CAIR). This chain is N5-carboxyaminoimidazole ribonucleotide synthase, found in Staphylococcus saprophyticus subsp. saprophyticus (strain ATCC 15305 / DSM 20229 / NCIMB 8711 / NCTC 7292 / S-41).